A 587-amino-acid polypeptide reads, in one-letter code: Membrane protein insertase YidC (587 aa).

The next 5 helical transmembrane spans lie at 5–25 (SVIG…FMKP), 365–385 (GLII…LSLA), 430–450 (LGGC…FYVF), 480–500 (LPLY…TVFF), and 516–536 (IMIW…PSGL).

It belongs to the OXA1/ALB3/YidC family. Type 1 subfamily. In terms of assembly, interacts with the Sec translocase complex via SecD. Specifically interacts with transmembrane segments of nascent integral membrane proteins during membrane integration.

The protein resides in the cell inner membrane. In terms of biological role, required for the insertion and/or proper folding and/or complex formation of integral membrane proteins into the membrane. Involved in integration of membrane proteins that insert both dependently and independently of the Sec translocase complex, as well as at least some lipoproteins. Aids folding of multispanning membrane proteins. In Chlorobaculum parvum (strain DSM 263 / NCIMB 8327) (Chlorobium vibrioforme subsp. thiosulfatophilum), this protein is Membrane protein insertase YidC.